A 227-amino-acid chain; its full sequence is Octanoyltransferase (227 aa).

A BPL/LPL catalytic domain is found at 47–223 (EDTADEIWLL…HLLRLLPPGV (177 aa)). Substrate-binding positions include 87–94 (RGGQITYH), 154–156 (ALG), and 167–169 (GLA). C185 functions as the Acyl-thioester intermediate in the catalytic mechanism.

The protein belongs to the LipB family.

The protein resides in the cytoplasm. It carries out the reaction octanoyl-[ACP] + L-lysyl-[protein] = N(6)-octanoyl-L-lysyl-[protein] + holo-[ACP] + H(+). It participates in protein modification; protein lipoylation via endogenous pathway; protein N(6)-(lipoyl)lysine from octanoyl-[acyl-carrier-protein]: step 1/2. Functionally, catalyzes the transfer of endogenously produced octanoic acid from octanoyl-acyl-carrier-protein onto the lipoyl domains of lipoate-dependent enzymes. Lipoyl-ACP can also act as a substrate although octanoyl-ACP is likely to be the physiological substrate. The polypeptide is Octanoyltransferase (Azoarcus sp. (strain BH72)).